Reading from the N-terminus, the 349-residue chain is Holliday junction branch migration complex subunit RuvB (349 aa).

Over residues 1-15 (MSDDYRETDPTRQPE) the composition is skewed to basic and acidic residues. Residues 1 to 25 (MSDDYRETDPTRQPEDMGEGSLRPE) are disordered. The large ATPase domain (RuvB-L) stretch occupies residues 1-183 (MSDDYRETDP…FGIPLRLVFY (183 aa)). Residues leucine 22, arginine 23, glycine 64, lysine 67, threonine 68, threonine 69, 130–132 (EDF), arginine 173, tyrosine 183, and arginine 220 each bind ATP. Threonine 68 is a Mg(2+) binding site. The interval 184 to 254 (TPEELRAIVS…LADAALGRLE (71 aa)) is small ATPAse domain (RuvB-S). Residues 257–349 (ERGLDAMDRR…SSLEQDDSAP (93 aa)) are head domain (RuvB-H). Positions 293, 312, and 317 each coordinate DNA.

The protein belongs to the RuvB family. Homohexamer. Forms an RuvA(8)-RuvB(12)-Holliday junction (HJ) complex. HJ DNA is sandwiched between 2 RuvA tetramers; dsDNA enters through RuvA and exits via RuvB. An RuvB hexamer assembles on each DNA strand where it exits the tetramer. Each RuvB hexamer is contacted by two RuvA subunits (via domain III) on 2 adjacent RuvB subunits; this complex drives branch migration. In the full resolvosome a probable DNA-RuvA(4)-RuvB(12)-RuvC(2) complex forms which resolves the HJ.

It is found in the cytoplasm. It catalyses the reaction ATP + H2O = ADP + phosphate + H(+). In terms of biological role, the RuvA-RuvB-RuvC complex processes Holliday junction (HJ) DNA during genetic recombination and DNA repair, while the RuvA-RuvB complex plays an important role in the rescue of blocked DNA replication forks via replication fork reversal (RFR). RuvA specifically binds to HJ cruciform DNA, conferring on it an open structure. The RuvB hexamer acts as an ATP-dependent pump, pulling dsDNA into and through the RuvAB complex. RuvB forms 2 homohexamers on either side of HJ DNA bound by 1 or 2 RuvA tetramers; 4 subunits per hexamer contact DNA at a time. Coordinated motions by a converter formed by DNA-disengaged RuvB subunits stimulates ATP hydrolysis and nucleotide exchange. Immobilization of the converter enables RuvB to convert the ATP-contained energy into a lever motion, pulling 2 nucleotides of DNA out of the RuvA tetramer per ATP hydrolyzed, thus driving DNA branch migration. The RuvB motors rotate together with the DNA substrate, which together with the progressing nucleotide cycle form the mechanistic basis for DNA recombination by continuous HJ branch migration. Branch migration allows RuvC to scan DNA until it finds its consensus sequence, where it cleaves and resolves cruciform DNA. The protein is Holliday junction branch migration complex subunit RuvB of Gluconobacter oxydans (strain 621H) (Gluconobacter suboxydans).